The following is a 166-amino-acid chain: Photosystem I assembly protein Ycf3 (166 aa).

3 TPR repeats span residues 35-68, 72-105, and 120-153; these read AFTYYRNGMSAQSEGEYAEALQNYYQALRYEIDA, SYMLYNIGLIHSSNGQQSKALEYYYQALDRNPRL, and GEQALINNQDEISKIFFDKAADYWKEAIRLSPTS.

This sequence belongs to the Ycf3 family.

The protein resides in the plastid. The protein localises to the chloroplast thylakoid membrane. Functionally, essential for the assembly of the photosystem I (PSI) complex. May act as a chaperone-like factor to guide the assembly of the PSI subunits. The polypeptide is Photosystem I assembly protein Ycf3 (Bigelowiella natans (Pedinomonas minutissima)).